The following is a 388-amino-acid chain: Branched-chain-amino-acid aminotransferase 2, chloroplastic (388 aa).

The N-terminal 22 residues, 1–22 (MIKTITSLRKTLVLPLHLHIRT), are a transit peptide targeting the chloroplast. At lysine 235 the chain carries N6-(pyridoxal phosphate)lysine.

Belongs to the class-IV pyridoxal-phosphate-dependent aminotransferase family. The cofactor is pyridoxal 5'-phosphate.

The protein resides in the plastid. It localises to the chloroplast. The catalysed reaction is L-leucine + 2-oxoglutarate = 4-methyl-2-oxopentanoate + L-glutamate. It catalyses the reaction L-isoleucine + 2-oxoglutarate = (S)-3-methyl-2-oxopentanoate + L-glutamate. It carries out the reaction L-valine + 2-oxoglutarate = 3-methyl-2-oxobutanoate + L-glutamate. Its pathway is amino-acid biosynthesis; L-isoleucine biosynthesis; L-isoleucine from 2-oxobutanoate: step 4/4. It functions in the pathway amino-acid biosynthesis; L-leucine biosynthesis; L-leucine from 3-methyl-2-oxobutanoate: step 4/4. The protein operates within amino-acid biosynthesis; L-valine biosynthesis; L-valine from pyruvate: step 4/4. Functionally, converts 2-oxo acids to branched-chain amino acids. Shows activity with L-Leu, L-Ile and L-Val as amino donors and 2-oxoglutarate as an amino acceptor, but no activity for D-isomers of Leu, Ile, Val, Asp, Glu or Ala. This chain is Branched-chain-amino-acid aminotransferase 2, chloroplastic (BCAT2), found in Arabidopsis thaliana (Mouse-ear cress).